A 450-amino-acid polypeptide reads, in one-letter code: Enolase (450 aa).

Residue glutamine 173 coordinates (2R)-2-phosphoglycerate. The active-site Proton donor is the glutamate 215. Mg(2+)-binding residues include aspartate 254, glutamate 308, and aspartate 335. Residues lysine 360, arginine 389, serine 390, and lysine 411 each coordinate (2R)-2-phosphoglycerate. The Proton acceptor role is filled by lysine 360.

This sequence belongs to the enolase family. Mg(2+) serves as cofactor.

The protein resides in the cytoplasm. It localises to the secreted. It is found in the cell surface. The catalysed reaction is (2R)-2-phosphoglycerate = phosphoenolpyruvate + H2O. The protein operates within carbohydrate degradation; glycolysis; pyruvate from D-glyceraldehyde 3-phosphate: step 4/5. Functionally, catalyzes the reversible conversion of 2-phosphoglycerate (2-PG) into phosphoenolpyruvate (PEP). It is essential for the degradation of carbohydrates via glycolysis. This chain is Enolase, found in Malacoplasma penetrans (strain HF-2) (Mycoplasma penetrans).